We begin with the raw amino-acid sequence, 271 residues long: 3-methyl-2-oxobutanoate hydroxymethyltransferase (271 aa).

The Mg(2+) site is built by Asp52 and Asp91. 3-methyl-2-oxobutanoate-binding positions include 52–53 (DS), Asp91, and Lys121. Glu123 contacts Mg(2+). The Proton acceptor role is filled by Glu189.

It belongs to the PanB family. In terms of assembly, homodecamer; pentamer of dimers. The cofactor is Mg(2+).

The protein localises to the cytoplasm. The catalysed reaction is 3-methyl-2-oxobutanoate + (6R)-5,10-methylene-5,6,7,8-tetrahydrofolate + H2O = 2-dehydropantoate + (6S)-5,6,7,8-tetrahydrofolate. Its pathway is cofactor biosynthesis; (R)-pantothenate biosynthesis; (R)-pantoate from 3-methyl-2-oxobutanoate: step 1/2. Its function is as follows. Catalyzes the reversible reaction in which hydroxymethyl group from 5,10-methylenetetrahydrofolate is transferred onto alpha-ketoisovalerate to form ketopantoate. The chain is 3-methyl-2-oxobutanoate hydroxymethyltransferase from Acidothermus cellulolyticus (strain ATCC 43068 / DSM 8971 / 11B).